The primary structure comprises 223 residues: Ribose-5-phosphate isomerase A (223 aa).

Residues Thr32 to Thr35, Asp85 to Asp88, and Lys98 to Gly101 contribute to the substrate site. The Proton acceptor role is filled by Glu107. Position 125 (Lys125) interacts with substrate.

This sequence belongs to the ribose 5-phosphate isomerase family. Homodimer.

It catalyses the reaction aldehydo-D-ribose 5-phosphate = D-ribulose 5-phosphate. Its pathway is carbohydrate degradation; pentose phosphate pathway; D-ribose 5-phosphate from D-ribulose 5-phosphate (non-oxidative stage): step 1/1. In terms of biological role, catalyzes the reversible conversion of ribose-5-phosphate to ribulose 5-phosphate. The polypeptide is Ribose-5-phosphate isomerase A (Pseudomonas aeruginosa (strain LESB58)).